The chain runs to 227 residues: 7-cyano-7-deazaguanine synthase (227 aa).

Leucine 7–leucine 17 lines the ATP pocket. 4 residues coordinate Zn(2+): cysteine 191, cysteine 199, cysteine 202, and cysteine 205.

It belongs to the QueC family. It depends on Zn(2+) as a cofactor.

The enzyme catalyses 7-carboxy-7-deazaguanine + NH4(+) + ATP = 7-cyano-7-deazaguanine + ADP + phosphate + H2O + H(+). The protein operates within purine metabolism; 7-cyano-7-deazaguanine biosynthesis. Its function is as follows. Catalyzes the ATP-dependent conversion of 7-carboxy-7-deazaguanine (CDG) to 7-cyano-7-deazaguanine (preQ(0)). The sequence is that of 7-cyano-7-deazaguanine synthase from Trichormus variabilis (strain ATCC 29413 / PCC 7937) (Anabaena variabilis).